A 271-amino-acid polypeptide reads, in one-letter code: Regulatory protein RecX (271 aa).

It belongs to the RecX family.

It is found in the cytoplasm. In terms of biological role, modulates RecA activity. The chain is Regulatory protein RecX from Lactobacillus delbrueckii subsp. bulgaricus (strain ATCC BAA-365 / Lb-18).